Reading from the N-terminus, the 129-residue chain is Glycine cleavage system H protein (129 aa).

In terms of domain architecture, Lipoyl-binding spans 23–105 (SAVVGITEHA…YGEGWLAKFS (83 aa)). The residue at position 64 (lysine 64) is an N6-lipoyllysine.

The protein belongs to the GcvH family. The glycine cleavage system is composed of four proteins: P, T, L and H. (R)-lipoate is required as a cofactor.

The glycine cleavage system catalyzes the degradation of glycine. The H protein shuttles the methylamine group of glycine from the P protein to the T protein. In Herpetosiphon aurantiacus (strain ATCC 23779 / DSM 785 / 114-95), this protein is Glycine cleavage system H protein.